The chain runs to 480 residues: Ribulose bisphosphate carboxylase large chain (480 aa).

Positions 1–2 (MS) are excised as a propeptide. Residue Pro3 is modified to N-acetylproline. Lys14 is subject to N6,N6,N6-trimethyllysine. Residues Asn123 and Thr173 each coordinate substrate. Residue Lys175 is the Proton acceptor of the active site. Lys177 provides a ligand contact to substrate. Residues Lys201, Asp203, and Glu204 each contribute to the Mg(2+) site. At Lys201 the chain carries N6-carboxylysine. The Proton acceptor role is filled by His294. Substrate-binding residues include Arg295, His327, and Ser379.

Belongs to the RuBisCO large chain family. Type I subfamily. Heterohexadecamer of 8 large chains and 8 small chains; disulfide-linked. The disulfide link is formed within the large subunit homodimers. It depends on Mg(2+) as a cofactor. Post-translationally, the disulfide bond which can form in the large chain dimeric partners within the hexadecamer appears to be associated with oxidative stress and protein turnover.

Its subcellular location is the plastid. It is found in the chloroplast. The enzyme catalyses 2 (2R)-3-phosphoglycerate + 2 H(+) = D-ribulose 1,5-bisphosphate + CO2 + H2O. It catalyses the reaction D-ribulose 1,5-bisphosphate + O2 = 2-phosphoglycolate + (2R)-3-phosphoglycerate + 2 H(+). RuBisCO catalyzes two reactions: the carboxylation of D-ribulose 1,5-bisphosphate, the primary event in carbon dioxide fixation, as well as the oxidative fragmentation of the pentose substrate in the photorespiration process. Both reactions occur simultaneously and in competition at the same active site. This is Ribulose bisphosphate carboxylase large chain from Mollugo verticillata (Green carpetweed).